We begin with the raw amino-acid sequence, 615 residues long: MVSGPLALRWCAWAGRGDMGPDMELPSHSKQLLLQLNQQRTKGFLCDVIIMVENSIFRAHKNVLAASSIYFKSLVLHDNLINLDTDMVSSTVFQQILDFIYTGKLLPSDQPAEPNFSTLLTAASYLQLPELAALCRRKLKRAGKPFGSGRAGSTGMGRPPRSQRLSTASVIQARYQGLVDGRKGAHAPQELPQAKGSDDELFLGGSNQDSVQGLGRAVCPAGGEAGLGGCSSSTNGSSGGCEQELGLDLSKKSPPLPPATPGPHLTPDDAAQLSDSQHGSPPAASAPPVANSASYSELGGTPDEPMDLEGAEDNHLSLLEAPGGQPRKSLRHSTRKKEWGKKEPVAGSPFERREAGPKGPCPGEEGEGVGDRVPNGILASGAGPSGPYGEPPYPCKEEEENGKDASEDSAQSGSEGGSGHASAHYMYRQEGYETVSYGDNLYVCIPCAKGFPSSEQLNAHVETHTEEELFIKEEGAYETGSGGAEEEAEDLSAPSAAYTAEPRPFKCSVCEKTYKDPATLRQHEKTHWLTRPFPCNICGKMFTQRGTMTRHMRSHLGLKPFACDECGMRFTRQYRLTEHMRVHSGEKPYECQLCGGKFTQQRNLISHLRMHTSPS.

The BTB domain occupies 46–109; the sequence is CDVIIMVENS…IYTGKLLPSD (64 aa). Positions 144 to 167 are disordered; sequence KPFGSGRAGSTGMGRPPRSQRLST. 3 positions are modified to phosphoserine: S166, S169, and S197. Disordered regions lie at residues 182-208 and 229-421; these read RKGA…GSNQ and GCSS…SGHA. Residues 246–250 form a binding to CtBP region; sequence GLDLS. The segment covering 280–296 has biased composition (low complexity); that stretch reads SPPAASAPPVANSASYS. Residues 336–356 show a composition bias toward basic and acidic residues; that stretch reads KKEWGKKEPVAGSPFERREAG. S348 carries the phosphoserine modification. Over residues 379 to 388 the composition is skewed to low complexity; that stretch reads ASGAGPSGPY. S412 bears the Phosphoserine mark. 5 consecutive C2H2-type zinc fingers follow at residues 442–469, 505–532, 533–560, 561–588, and 589–615; these read YVCI…EEEL, FKCS…LTRP, FPCN…GLKP, FACD…GEKP, and YECQ…TSPS.

It belongs to the krueppel C2H2-type zinc-finger protein family. Hic subfamily. Self-associates. Interacts with HIC1. In terms of tissue distribution, highest levels in cerebellum.

It is found in the nucleus. In terms of biological role, transcriptional repressor. In Homo sapiens (Human), this protein is Hypermethylated in cancer 2 protein (HIC2).